Consider the following 79-residue polypeptide: uncharacterized protein (79 aa).

A signal peptide spans 1 to 19; sequence MKYVALAFVLSLVILQISA. Residues 52–71 form a disordered region; it reads RGRKSRTQSGRNQGKSTSDS. Residues 58 to 71 are compositionally biased toward polar residues; the sequence is TQSGRNQGKSTSDS.

In terms of tissue distribution, nacreous layer of shell (at protein level). Expressed primarily in the mantle with highest level in the mantle pallium and lower level in the mantle edge.

It localises to the secreted. This is an uncharacterized protein from Margaritifera margaritifera (Freshwater pearl mussel).